The chain runs to 550 residues: Chaperonin GroEL (550 aa).

ATP contacts are provided by residues 30-33 (TLGP), Lys-51, 87-91 (DGTTT), Gly-415, 479-481 (NAA), and Asp-495.

Belongs to the chaperonin (HSP60) family. In terms of assembly, forms a cylinder of 14 subunits composed of two heptameric rings stacked back-to-back. Interacts with the co-chaperonin GroES.

It localises to the cytoplasm. It catalyses the reaction ATP + H2O + a folded polypeptide = ADP + phosphate + an unfolded polypeptide.. In terms of biological role, together with its co-chaperonin GroES, plays an essential role in assisting protein folding. The GroEL-GroES system forms a nano-cage that allows encapsulation of the non-native substrate proteins and provides a physical environment optimized to promote and accelerate protein folding. The sequence is that of Chaperonin GroEL from Aromatoleum aromaticum (strain DSM 19018 / LMG 30748 / EbN1) (Azoarcus sp. (strain EbN1)).